The following is a 138-amino-acid chain: Probable glycine cleavage system H protein 1 (138 aa).

Residues 30-112 enclose the Lipoyl-binding domain; it reads IATVGITDYA…YGRGWIFKLK (83 aa). At K71 the chain carries N6-lipoyllysine.

Belongs to the GcvH family. In terms of assembly, the glycine cleavage system is composed of four proteins: P, T, L and H. (R)-lipoate serves as cofactor.

Functionally, the glycine cleavage system catalyzes the degradation of glycine. The H protein shuttles the methylamine group of glycine from the P protein to the T protein. The polypeptide is Probable glycine cleavage system H protein 1 (Sulfolobus acidocaldarius (strain ATCC 33909 / DSM 639 / JCM 8929 / NBRC 15157 / NCIMB 11770)).